The following is a 610-amino-acid chain: T-cell immunomodulatory protein (610 aa).

Positions 1 to 32 (MAAGLLPSARAVLALLFLGLALLSVGPAPAQA) are cleaved as a signal peptide. Asparagine 35, asparagine 94, asparagine 123, asparagine 138, asparagine 145, asparagine 150, asparagine 175, and asparagine 241 each carry an N-linked (GlcNAc...) asparagine glycan. Residues 98-135 (LVTSVVPGDYDGDSQMDVLLTYFPQNHSNNELGAVIFW) form an FG-GAP 1; atypical repeat. The FG-GAP 2; atypical repeat unit spans residues 153-183 (FHDQPLIMDFNGDLIPDVFAITNESSQPQIL). One copy of the FG-GAP 3; atypical repeat lies at 256 to 291 (VVGQSAFADFDGDGHMDHLLPGCEDKDCQKSAIYLM). Asparagine 351, asparagine 369, and asparagine 480 each carry an N-linked (GlcNAc...) asparagine glycan. The helical transmembrane segment at 564–584 (IVLLTAVALTGVCVFILAIIA) threads the bilayer.

It belongs to the TIP family. Interacts with RUVBL1, RUVBL2 and alpha-tubulin.

It is found in the secreted. It localises to the cell membrane. Its function is as follows. Modulator of T-cell function. Has a protective effect in graft versus host disease model. This Rattus norvegicus (Rat) protein is T-cell immunomodulatory protein.